Consider the following 130-residue polypeptide: Small ribosomal subunit protein uS9 (130 aa).

It belongs to the universal ribosomal protein uS9 family.

The protein is Small ribosomal subunit protein uS9 of Janthinobacterium sp. (strain Marseille) (Minibacterium massiliensis).